A 587-amino-acid polypeptide reads, in one-letter code: Trans-activating transcriptional regulatory protein (587 aa).

It belongs to the nucleopolyhedrovirus IE-1 protein family.

Its function is as follows. Regulatory transcriptional protein, which trans-activates gene expression from early baculovirus promoters. Can also trans-activate its own promoter, suggesting that it is autoregulated during normal infection of insect cells. The chain is Trans-activating transcriptional regulatory protein (IE1) from Bombyx mori nuclear polyhedrosis virus (BmNPV).